The sequence spans 325 residues: Malate dehydrogenase (325 aa).

NAD(+) is bound at residue 11 to 17 (GAAGHVS). Residues Arg-92 and Arg-98 each contribute to the substrate site. Residues Asn-105, Gln-112, and 129 to 131 (VGN) each bind NAD(+). The substrate site is built by Asn-131 and Arg-162. His-187 serves as the catalytic Proton acceptor.

Belongs to the LDH/MDH superfamily. MDH type 2 family.

The catalysed reaction is (S)-malate + NAD(+) = oxaloacetate + NADH + H(+). Functionally, catalyzes the reversible oxidation of malate to oxaloacetate. The chain is Malate dehydrogenase from Desulfotalea psychrophila (strain LSv54 / DSM 12343).